The chain runs to 55 residues: AHMDCTEFNPLCRCNKMLGDLICAVIGDAKEEHRNMCALCCEHPGGFEYSNGPCE.

Positions 1-55 (AHMDCTEFNPLCRCNKMLGDLICAVIGDAKEEHRNMCALCCEHPGGFEYSNGPCE) constitute a Kazal-like domain. Disulfide bonds link Cys5-Cys40, Cys12-Cys41, Cys14-Cys37, and Cys23-Cys54.

The protein localises to the secreted. Functionally, potent inhibitor of trypsin. This Halocynthia roretzi (Sea squirt) protein is Trypsin inhibitor.